Here is a 527-residue protein sequence, read N- to C-terminus: Optineurin (527 aa).

2 disordered regions span residues 1-32 (MSHQPLSCLTEKEDSPTESTGNGPPYLAHPNL) and 101-143 (SHEN…KDQL). Residues 38–170 (EELLQQMKEL…VSELQLKLNS (133 aa)) are a coiled coil. The segment at 58-209 (MKLNNQAMKG…GPTRTVSTSR (152 aa)) is interaction with Rab8. An LIR motif is present at residues 176-181 (DSFVEI). Phosphoserine; by TBK1 is present on S177. Over residues 186–197 (GEAEGSVKEIKH) the composition is skewed to basic and acidic residues. Disordered stretches follow at residues 186–214 (GEAEGSVKEIKHSPGPTRTVSTSRALSKY) and 262–292 (SDFEKKASNRSEIETQTEGSTEKENDEEKGL). S198 carries the phosphoserine modification. Polar residues predominate over residues 201 to 210 (PTRTVSTSRA). The stretch at 239–458 (CLREGNQKVE…LLKENDAFED (220 aa)) forms a coiled coil. Basic and acidic residues-rich tracts occupy residues 262–274 (SDFEKKASNRSEI) and 281–292 (STEKENDEEKGL). Positions 361-527 (TRKESEKVDR…LQIHVMDCII (167 aa)) are interaction with HD. Residues 362–470 (RKESEKVDRA…RQSLMEMQSR (109 aa)) form an interaction with MYO6 region. Positions 424–429 (DFHAER) match the UBAN motif. A Phosphoserine modification is found at S476. The CCHC NOA-type zinc-finger motif lies at 497–527 (QRNIPIHSCPKCGEVLPDIDTLQIHVMDCII). The Zn(2+) site is built by C505, C508, H521, and C525.

Self-associates. Interacts with HD. Interacts with GTF3A. Interacts with MYO6. Interacts (via UBAN) with ubiquitinated TFRC. Interacts with GTP-bound Rab8 (RAB8A and/or RAB8B). Interacts with TBC1D17. Interacts with TBK1. Interacts with TRAF3. Binds to linear ubiquitin chains. Interacts with LC3 family members MAP1LC3A, MAP1LC3B, GABARAP, GABARAPL1 and GABARAPL2; OPTN phosphorylation increases the association (at least with MAP1LC3B). Interacts with RAB12; the interaction may be indirect. Interacts with TBK1; this interaction leads to the Golgi localization of TBK1 and its subsequent activation. Interacts with palmitoyltransferase ZDHHC17/HIP14; the interaction does not lead to palmitoylation of OPTN. Interacts with CYLD. Interacts with TOM1; the interaction is indirect and is mediated by MYO6, which acts as a bridge between TOM1 and OPTN. Interacts with USP12; the interaction is independent of USP12 deubiquitinase activity and may be involved in regulation of autophagic flux. Phosphorylated by TBK1, leading to restrict bacterial proliferation in case of infection.

It is found in the cytoplasm. The protein resides in the perinuclear region. Its subcellular location is the golgi apparatus. The protein localises to the trans-Golgi network. It localises to the cytoplasmic vesicle. It is found in the autophagosome. The protein resides in the recycling endosome. Plays an important role in the maintenance of the Golgi complex, in membrane trafficking, in exocytosis, through its interaction with myosin VI and Rab8. Links myosin VI to the Golgi complex and plays an important role in Golgi ribbon formation. Negatively regulates the induction of IFNB in response to RNA virus infection. Plays a neuroprotective role in the eye and optic nerve. Probably part of the TNF-alpha signaling pathway that can shift the equilibrium toward induction of cell death. May act by regulating membrane trafficking and cellular morphogenesis via a complex that contains Rab8 and huntingtin (HD). Mediates the interaction of Rab8 with the probable GTPase-activating protein TBC1D17 during Rab8-mediated endocytic trafficking, such as that of transferrin receptor (TFRC/TfR); regulates Rab8 recruitment to tubules emanating from the endocytic recycling compartment. Autophagy receptor that interacts directly with both the cargo to become degraded and an autophagy modifier of the MAP1 LC3 family; targets ubiquitin-coated bacteria (xenophagy) and appears to function in the same pathway as SQSTM1 and CALCOCO2/NDP52. The polypeptide is Optineurin (OPTN) (Pongo abelii (Sumatran orangutan)).